Here is a 327-residue protein sequence, read N- to C-terminus: Flap endonuclease 1 (327 aa).

The tract at residues 1–98 is N-domain; that stretch reads MGVKLKDIIQ…ETIDQRRQTR (98 aa). 7 residues coordinate Mg(2+): Asp27, Asp80, Glu152, Glu154, Asp173, Asp175, and Asp226. The tract at residues 116-246 is I-domain; it reads EARKYAMRSS…KTALKLAKKG (131 aa). The tract at residues 319–327 is interaction with PCNA; it reads SQKSLEDWF.

Belongs to the XPG/RAD2 endonuclease family. FEN1 subfamily. As to quaternary structure, interacts with PCNA. PCNA stimulates the nuclease activity without altering cleavage specificity. Requires Mg(2+) as cofactor.

Its function is as follows. Structure-specific nuclease with 5'-flap endonuclease and 5'-3' exonuclease activities involved in DNA replication and repair. During DNA replication, cleaves the 5'-overhanging flap structure that is generated by displacement synthesis when DNA polymerase encounters the 5'-end of a downstream Okazaki fragment. Binds the unpaired 3'-DNA end and kinks the DNA to facilitate 5' cleavage specificity. Cleaves one nucleotide into the double-stranded DNA from the junction in flap DNA, leaving a nick for ligation. Also involved in the base excision repair (BER) pathway. Acts as a genome stabilization factor that prevents flaps from equilibrating into structures that lead to duplications and deletions. Also possesses 5'-3' exonuclease activity on nicked or gapped double-stranded DNA. The sequence is that of Flap endonuclease 1 from Methanobrevibacter smithii (strain ATCC 35061 / DSM 861 / OCM 144 / PS).